The primary structure comprises 2372 residues: Nonribosomal peptide synthase roqA (2372 aa).

The segment at 217–610 (EHCRSQPDAE…VGRKDREVKI (394 aa)) is adenylation 1. Residues 723–745 (AASSHSSTREQPSNQRDKEDVEL) form a disordered region. Positions 725-736 (SSHSSTREQPSN) are enriched in polar residues. The Carrier 1 domain occupies 750–823 (SAKENTLCSV…KIARCTAESK (74 aa)). Position 784 is an O-(pantetheine 4'-phosphoryl)serine (S784). Residues 856–1122 (EDIYPCTPLQ…FATFPFRTQL (267 aa)) are condensation 1. The tract at residues 1290 to 1679 (QPNSEAVCAW…VGRKDTQVKL (390 aa)) is adenylation 2. One can recognise a Carrier 2 domain in the interval 1819–1895 (KPTTEQERFV…LFCKHVILIQ (77 aa)). The residue at position 1856 (S1856) is an O-(pantetheine 4'-phosphoryl)serine. The tract at residues 1962–2227 (TSNYTSTAIF…FNVLPCRIAI (266 aa)) is condensation 2.

It functions in the pathway alkaloid biosynthesis. In terms of biological role, dipeptide synthase; part of the gene cluster that mediates the biosynthesis of the mycotoxins roquefortine C and meleagrin. The first stage is catalyzed by the dipeptide synthase roqA which condenses histidine and tryptophan to produce histidyltryptophanyldiketopiperazine (HTD). HTD is then converted to roquefortine C through two possible pathways. In the first pathway, prenyltransferase roqD transforms HTD to the intermediate roquefortine D, which is in turn converted to roquefortine C by the cytochrome P450 monooxygenase roqR. In the second pathway, HTD is first converted to the intermediate dehydrohistidyltryptophanyldi-ketopiperazine (DHTD) by roqR which is then prenylated by roqD to form roquefortine C. Roquefortine C can be further transformed to meleagrin via three more reactions including oxydation to glandicolin A by roqM, which is further reduced to glandicoline B by roqO. Finally, glandicoline B is converted to meleagrin by the glandicoline B O-methyltransferase roqN. More studies identified further branching and additional metabolites produced by the roquefortine/meleagrin cluster, including roquefortine F, roquefortine L, roquefortine M, roquefortine N and neoxaline. In Penicillium rubens (strain ATCC 28089 / DSM 1075 / NRRL 1951 / Wisconsin 54-1255) (Penicillium chrysogenum), this protein is Nonribosomal peptide synthase roqA.